The primary structure comprises 691 residues: Elongation factor G (691 aa).

A tr-type G domain is found at 8-283 (KKVRNIGIAA…AVVAYLPAPD (276 aa)). Residues 17–24 (AHIDAGKT), 81–85 (DTPGH), and 135–138 (NKMD) contribute to the GTP site.

Belongs to the TRAFAC class translation factor GTPase superfamily. Classic translation factor GTPase family. EF-G/EF-2 subfamily.

It localises to the cytoplasm. In terms of biological role, catalyzes the GTP-dependent ribosomal translocation step during translation elongation. During this step, the ribosome changes from the pre-translocational (PRE) to the post-translocational (POST) state as the newly formed A-site-bound peptidyl-tRNA and P-site-bound deacylated tRNA move to the P and E sites, respectively. Catalyzes the coordinated movement of the two tRNA molecules, the mRNA and conformational changes in the ribosome. The polypeptide is Elongation factor G (Campylobacter jejuni subsp. doylei (strain ATCC BAA-1458 / RM4099 / 269.97)).